We begin with the raw amino-acid sequence, 107 residues long: Glutaredoxin-1 (107 aa).

Residue Ala-2 is modified to N-acetylalanine. The Glutaredoxin domain maps to 3 to 106 (QEFVNCKIQS…TRLKQIGALQ (104 aa)). N6-succinyllysine is present on Lys-9. Intrachain disulfides connect Cys-23-Cys-26 and Cys-79-Cys-83.

The protein belongs to the glutaredoxin family.

Its subcellular location is the cytoplasm. Functionally, has a glutathione-disulfide oxidoreductase activity in the presence of NADPH and glutathione reductase. Reduces low molecular weight disulfides and proteins. The polypeptide is Glutaredoxin-1 (Glrx) (Mus musculus (Mouse)).